The chain runs to 44 residues: Photosystem I reaction center subunit IX (44 aa).

The chain crosses the membrane as a helical span at residues 7-27 (YLSTAPVLATLWFSSLAGLLI).

The protein belongs to the PsaJ family.

It is found in the plastid. The protein resides in the chloroplast thylakoid membrane. May help in the organization of the PsaE and PsaF subunits. This Welwitschia mirabilis (Tree tumbo) protein is Photosystem I reaction center subunit IX.